The primary structure comprises 255 residues: Adenosylcobinamide-GDP ribazoletransferase (255 aa).

The next 7 helical transmembrane spans lie at 33-53, 57-77, 107-127, 136-156, 174-194, 196-216, and 234-254; these read IFLPAYGLVTGGILALIIELF, FPGFFWAGVIIAGQIYLSGAL, VGSMAVAFFGAFLILKYGSYA, FTVLISEIILRGTGYLVIYSF, AGLIFTLGQTLIFTLGAAAFF, FSLIKILIILLLAYLFAFVVA, and IMELTGLFVPVAVLLINNIGV.

Belongs to the CobS family. Requires Mg(2+) as cofactor.

It is found in the cell membrane. The catalysed reaction is alpha-ribazole + adenosylcob(III)inamide-GDP = adenosylcob(III)alamin + GMP + H(+). It carries out the reaction alpha-ribazole 5'-phosphate + adenosylcob(III)inamide-GDP = adenosylcob(III)alamin 5'-phosphate + GMP + H(+). It functions in the pathway cofactor biosynthesis; adenosylcobalamin biosynthesis; adenosylcobalamin from cob(II)yrinate a,c-diamide: step 7/7. Functionally, joins adenosylcobinamide-GDP and alpha-ribazole to generate adenosylcobalamin (Ado-cobalamin). Also synthesizes adenosylcobalamin 5'-phosphate from adenosylcobinamide-GDP and alpha-ribazole 5'-phosphate. The sequence is that of Adenosylcobinamide-GDP ribazoletransferase from Carboxydothermus hydrogenoformans (strain ATCC BAA-161 / DSM 6008 / Z-2901).